Reading from the N-terminus, the 392-residue chain is Meiotically up-regulated gene 11 protein (392 aa).

Its subcellular location is the cytoplasm. It is found in the nucleus. Functionally, has a role in meiosis. The chain is Meiotically up-regulated gene 11 protein (mug11) from Schizosaccharomyces pombe (strain 972 / ATCC 24843) (Fission yeast).